Reading from the N-terminus, the 183-residue chain is Dual-action ribosomal maturation protein DarP (183 aa).

The protein belongs to the DarP family.

Its subcellular location is the cytoplasm. Its function is as follows. Member of a network of 50S ribosomal subunit biogenesis factors which assembles along the 30S-50S interface, preventing incorrect 23S rRNA structures from forming. Promotes peptidyl transferase center (PTC) maturation. The sequence is that of Dual-action ribosomal maturation protein DarP from Escherichia coli O81 (strain ED1a).